Reading from the N-terminus, the 371-residue chain is Carnitine monooxygenase oxygenase subunit (371 aa).

In terms of domain architecture, Rieske spans tryptophan 44–isoleucine 152. [2Fe-2S] cluster is bound by residues cysteine 86, histidine 88, cysteine 106, and histidine 109. The Fe cation site is built by histidine 208, histidine 213, and aspartate 323.

Belongs to the bacterial ring-hydroxylating dioxygenase alpha subunit family. CntA subfamily. In terms of assembly, composed of an oxygenase subunit (cntA) and a reductase subunit (cntB). It depends on [2Fe-2S] cluster as a cofactor. Requires Fe cation as cofactor.

It catalyses the reaction (R)-carnitine + NADH + O2 + H(+) = (3R)-3-hydroxy-4-oxobutanoate + trimethylamine + NAD(+) + H2O. The enzyme catalyses (R)-carnitine + NADPH + O2 + H(+) = (3R)-3-hydroxy-4-oxobutanoate + trimethylamine + NADP(+) + H2O. It participates in amine and polyamine metabolism; carnitine metabolism. Functionally, converts carnitine to trimethylamine and malic semialdehyde. The protein is Carnitine monooxygenase oxygenase subunit of Acinetobacter baumannii (strain ATCC 19606 / DSM 30007 / JCM 6841 / CCUG 19606 / CIP 70.34 / NBRC 109757 / NCIMB 12457 / NCTC 12156 / 81).